We begin with the raw amino-acid sequence, 431 residues long: MGKNVVVLGTQWGDEGKGKIVDLLTEQAAAVVRYQGGHNAGHTLVIDGEKTVLHLIPSGILREGVECLIGNGVVVAPDALLREITKLEEKGVPVRQRLRISPACPLILSYHVALDQAREKARGDAKIGTTGRGIGPAYEDKVARRGLRVGDLFHRERFAAKLGELLDYHNFQLVNFYKEPAIDFQKTLDECMEYAELLKPMMADVTAVLHDLRREGKDIMFEGAQGSLLDIDHGTYPYVTSSNTTAGGIATGSGFGPLYLNYILGITKAYTTRVGSGPFPTELFDDVGAFLAKRGHEFGATTGRARRCGWFDAVILRRAIEINSISGLCLTKLDVLDGLETIRICTGYKDANGQVLVDAPTDADSYLGLQPVYEEMPGWSESTLGAKTLEDLPAAARAYIKRVEELVGAPIDIISTGPDRNETIVLRHPFA.

GTP is bound by residues 13–19 (GDEGKGK) and 41–43 (GHT). D14 (proton acceptor) is an active-site residue. D14 and G41 together coordinate Mg(2+). Residues 14–17 (DEGK), 39–42 (NAGH), T130, R144, Q225, T240, and R304 each bind IMP. H42 functions as the Proton donor in the catalytic mechanism. 300–306 (ATTGRAR) lines the substrate pocket. GTP is bound by residues R306, 332-334 (KLD), and 415-417 (STG).

The protein belongs to the adenylosuccinate synthetase family. As to quaternary structure, homodimer. It depends on Mg(2+) as a cofactor.

Its subcellular location is the cytoplasm. It carries out the reaction IMP + L-aspartate + GTP = N(6)-(1,2-dicarboxyethyl)-AMP + GDP + phosphate + 2 H(+). It functions in the pathway purine metabolism; AMP biosynthesis via de novo pathway; AMP from IMP: step 1/2. Its function is as follows. Plays an important role in the de novo pathway of purine nucleotide biosynthesis. Catalyzes the first committed step in the biosynthesis of AMP from IMP. This chain is Adenylosuccinate synthetase, found in Ectopseudomonas mendocina (strain ymp) (Pseudomonas mendocina).